Here is a 204-residue protein sequence, read N- to C-terminus: ATP phosphoribosyltransferase (204 aa).

Belongs to the ATP phosphoribosyltransferase family. Short subfamily. As to quaternary structure, heteromultimer composed of HisG and HisZ subunits.

The protein resides in the cytoplasm. It catalyses the reaction 1-(5-phospho-beta-D-ribosyl)-ATP + diphosphate = 5-phospho-alpha-D-ribose 1-diphosphate + ATP. It participates in amino-acid biosynthesis; L-histidine biosynthesis; L-histidine from 5-phospho-alpha-D-ribose 1-diphosphate: step 1/9. Catalyzes the condensation of ATP and 5-phosphoribose 1-diphosphate to form N'-(5'-phosphoribosyl)-ATP (PR-ATP). Has a crucial role in the pathway because the rate of histidine biosynthesis seems to be controlled primarily by regulation of HisG enzymatic activity. This is ATP phosphoribosyltransferase from Staphylococcus aureus (strain USA300).